The following is a 158-amino-acid chain: GAF domain-containing protein A (158 aa).

A GAF domain is found at 32 to 158 (NQIANLANVT…LTQILKLLDN (127 aa)).

Belongs to the free Met sulfoxide reductase family.

This is GAF domain-containing protein A (gafA) from Dictyostelium discoideum (Social amoeba).